We begin with the raw amino-acid sequence, 251 residues long: Pyrroloquinoline-quinone synthase (251 aa).

This sequence belongs to the PqqC family.

The catalysed reaction is 6-(2-amino-2-carboxyethyl)-7,8-dioxo-1,2,3,4,7,8-hexahydroquinoline-2,4-dicarboxylate + 3 O2 = pyrroloquinoline quinone + 2 H2O2 + 2 H2O + H(+). Its pathway is cofactor biosynthesis; pyrroloquinoline quinone biosynthesis. Functionally, ring cyclization and eight-electron oxidation of 3a-(2-amino-2-carboxyethyl)-4,5-dioxo-4,5,6,7,8,9-hexahydroquinoline-7,9-dicarboxylic-acid to PQQ. This chain is Pyrroloquinoline-quinone synthase, found in Pseudomonas putida (strain GB-1).